Here is a 382-residue protein sequence, read N- to C-terminus: V-type proton ATPase subunit C 1 (382 aa).

Thr2 carries the N-acetylthreonine modification.

Belongs to the V-ATPase C subunit family. V-ATPase is a heteromultimeric enzyme made up of two complexes: the ATP-hydrolytic V1 complex and the proton translocation V0 complex. The V1 complex consists of three catalytic AB heterodimers that form a heterohexamer, three peripheral stalks each consisting of EG heterodimers, one central rotor including subunits D and F, and the regulatory subunits C and H. The proton translocation complex V0 consists of the proton transport subunit a, a ring of proteolipid subunits c9c'', rotary subunit d, subunits e and f, and the accessory subunits ATP6AP1/Ac45 and ATP6AP2/PRR. As to expression, expressed in brain (at protein level).

The protein localises to the cytoplasmic vesicle. Its subcellular location is the secretory vesicle. It is found in the synaptic vesicle membrane. It localises to the clathrin-coated vesicle membrane. Its function is as follows. Subunit of the V1 complex of vacuolar(H+)-ATPase (V-ATPase), a multisubunit enzyme composed of a peripheral complex (V1) that hydrolyzes ATP and a membrane integral complex (V0) that translocates protons. V-ATPase is responsible for acidifying and maintaining the pH of intracellular compartments and in some cell types, is targeted to the plasma membrane, where it is responsible for acidifying the extracellular environment. Subunit C is necessary for the assembly of the catalytic sector of the enzyme and is likely to have a specific function in its catalytic activity. This Bos taurus (Bovine) protein is V-type proton ATPase subunit C 1 (ATP6V1C1).